Reading from the N-terminus, the 119-residue chain is Large ribosomal subunit protein bL20 (119 aa).

It belongs to the bacterial ribosomal protein bL20 family.

Binds directly to 23S ribosomal RNA and is necessary for the in vitro assembly process of the 50S ribosomal subunit. It is not involved in the protein synthesizing functions of that subunit. The sequence is that of Large ribosomal subunit protein bL20 from Polaromonas sp. (strain JS666 / ATCC BAA-500).